A 541-amino-acid chain; its full sequence is Membrane protein insertase YidC (541 aa).

5 helical membrane-spanning segments follow: residues 6–26 (NILL…WQAD), 349–369 (FVGN…GLLF), 420–440 (GGCL…WVLL), 457–477 (LSVQ…MFVM), and 500–520 (MIFT…WLVG).

The protein belongs to the OXA1/ALB3/YidC family. Type 1 subfamily. Interacts with the Sec translocase complex via SecD. Specifically interacts with transmembrane segments of nascent integral membrane proteins during membrane integration.

The protein resides in the cell inner membrane. Required for the insertion and/or proper folding and/or complex formation of integral membrane proteins into the membrane. Involved in integration of membrane proteins that insert both dependently and independently of the Sec translocase complex, as well as at least some lipoproteins. Aids folding of multispanning membrane proteins. The polypeptide is Membrane protein insertase YidC (Shewanella sp. (strain ANA-3)).